A 360-amino-acid polypeptide reads, in one-letter code: Peptide chain release factor 1 (360 aa).

Gln235 is subject to N5-methylglutamine. The segment covering 285 to 295 (RQAAEQADTRR) has biased composition (basic and acidic residues). Residues 285-309 (RQAAEQADTRRNLLGSGDRSDKIRT) form a disordered region.

The protein belongs to the prokaryotic/mitochondrial release factor family. Methylated by PrmC. Methylation increases the termination efficiency of RF1.

It is found in the cytoplasm. Functionally, peptide chain release factor 1 directs the termination of translation in response to the peptide chain termination codons UAG and UAA. This Actinobacillus pleuropneumoniae serotype 7 (strain AP76) protein is Peptide chain release factor 1.